We begin with the raw amino-acid sequence, 292 residues long: ATP synthase gamma chain (292 aa).

The protein belongs to the ATPase gamma chain family. F-type ATPases have 2 components, CF(1) - the catalytic core - and CF(0) - the membrane proton channel. CF(1) has five subunits: alpha(3), beta(3), gamma(1), delta(1), epsilon(1). CF(0) has three main subunits: a, b and c.

The protein localises to the cell inner membrane. Its function is as follows. Produces ATP from ADP in the presence of a proton gradient across the membrane. The gamma chain is believed to be important in regulating ATPase activity and the flow of protons through the CF(0) complex. This Hydrogenobaculum sp. (strain Y04AAS1) protein is ATP synthase gamma chain.